Consider the following 282-residue polypeptide: Glutamate--LysW ligase ArgX (282 aa).

Residues Lys87, Lys127, 131-137 (GSWGRLV), and 167-178 (QEYINYKSRDIR) each bind ATP. An ATP-grasp domain is found at 91 to 277 (YSKLYREGIP…VAEELVSYVK (187 aa)). Arg192 lines the substrate pocket. Asn202 serves as a coordination point for ATP. Residue 203–204 (IA) participates in substrate binding. Positions 237, 250, and 252 each coordinate Mg(2+). 256-260 (EFKGF) contributes to the substrate binding site. Positions 259 to 260 (GF) match the GF motif that is essential for ArgX substrate specificity motif.

Belongs to the RimK family. LysX subfamily. Homotetramer. Interacts with LysW. It depends on Mg(2+) as a cofactor.

The catalysed reaction is [amino-group carrier protein]-C-terminal-L-glutamate + L-glutamate + ATP = [amino-group carrier protein]-C-terminal-gamma-(L-glutamyl)-L-glutamate + ADP + phosphate + H(+). It functions in the pathway amino-acid biosynthesis; L-arginine biosynthesis. In terms of biological role, catalyzes the ATP-dependent formation of a covalent bond between the amino group of glutamate and the gamma-carboxyl group of the C-terminal glutamate residue in LysW. This is Glutamate--LysW ligase ArgX from Sulfolobus acidocaldarius (strain ATCC 33909 / DSM 639 / JCM 8929 / NBRC 15157 / NCIMB 11770).